The following is a 373-amino-acid chain: Aromatic amino acid aminotransferase (373 aa).

Lysine 212 bears the N6-(pyridoxal phosphate)lysine mark.

The protein belongs to the class-II pyridoxal-phosphate-dependent aminotransferase family. Homodimer. The cofactor is pyridoxal 5'-phosphate.

The catalysed reaction is an aromatic L-alpha-amino acid + 2-oxoglutarate = an aromatic oxo-acid + L-glutamate. Functionally, aminotransferase that catalyzes the conversion of aromatic amino acids and 2-oxoglutarate into corresponding aromatic oxo acids and L-glutamate. The sequence is that of Aromatic amino acid aminotransferase from Corynebacterium jeikeium (strain K411).